The following is a 351-amino-acid chain: Glucose 1-dehydrogenase 1 (351 aa).

C39 serves as a coordination point for Zn(2+). Position 41 (T41) interacts with substrate. Residues H64 and E65 each contribute to the Zn(2+) site. Residues E113 and E149 each coordinate substrate. E149 provides a ligand contact to Zn(2+). NADP(+)-binding positions include 182 to 185, 265 to 267, and 292 to 294; these read AGPI, LGI, and ATN. Position 294 (N294) interacts with substrate.

It belongs to the zinc-containing alcohol dehydrogenase family. Glucose 1-dehydrogenase subfamily. Requires Zn(2+) as cofactor.

The catalysed reaction is D-glucose + NAD(+) = D-glucono-1,5-lactone + NADH + H(+). The enzyme catalyses D-glucose + NADP(+) = D-glucono-1,5-lactone + NADPH + H(+). Catalyzes the NAD(P)(+)-dependent oxidation of D-glucose to D-gluconate via gluconolactone. Can utilize both NAD(+) and NADP(+) as electron acceptor. Is involved in the degradation of glucose through a non-phosphorylative variant of the Entner-Doudoroff pathway. The chain is Glucose 1-dehydrogenase 1 from Vulcanisaeta moutnovskia (strain 768-28).